The chain runs to 109 residues: MSEIRLIRAINDELYLVEVQATLERKADSLHIGDLKIIKEKNSEKKKATLTVGNQYMEGVVESLKKPLAVLQKTNADPVDVYSSPSHELKCCSIIRERIRFSSRPLPTK.

Belongs to the CTF8 family. In terms of assembly, component of the ctf18-RFC complex which consists of ctf18, ctf8, dcc1, rfc2, rfc3, rfc4 and rfc5.

It is found in the nucleus. Its function is as follows. Essential for the fidelity of chromosome transmission. Required for the DNA replication block checkpoint. Replication factor C (RFC) complex has an essential but redundant activity in sister chromatid cohesion establishment. An RFC-like complex (ctf18-RFC) is formed where ctf18 replaces rfc1 in the RFC complex along with the association of dcc1 and ctf8. This complex is required for efficient establishment of chromosome cohesion during S-phase. Acts as a PCNA loader, loading PCNA onto primed templates. The polypeptide is Chromosome transmission fidelity protein 8 (ctf8) (Schizosaccharomyces pombe (strain 972 / ATCC 24843) (Fission yeast)).